A 118-amino-acid polypeptide reads, in one-letter code: MARIAGINIPDQKHTVIALTGIFGIGRTRARAICAATSIAEDAKIKELSEAQIDILREAVAEYTVEGDLRREVSMNIKRLMDLGCYRGIRHRRSLPLRGQRTKTNARTRKGPRKPIRK.

The tract at residues 94 to 118 (SLPLRGQRTKTNARTRKGPRKPIRK) is disordered.

This sequence belongs to the universal ribosomal protein uS13 family. Part of the 30S ribosomal subunit. Forms a loose heterodimer with protein S19. Forms two bridges to the 50S subunit in the 70S ribosome.

Located at the top of the head of the 30S subunit, it contacts several helices of the 16S rRNA. In the 70S ribosome it contacts the 23S rRNA (bridge B1a) and protein L5 of the 50S subunit (bridge B1b), connecting the 2 subunits; these bridges are implicated in subunit movement. Contacts the tRNAs in the A and P-sites. This chain is Small ribosomal subunit protein uS13, found in Shewanella violacea (strain JCM 10179 / CIP 106290 / LMG 19151 / DSS12).